A 444-amino-acid chain; its full sequence is DNA primase DnaG (444 aa).

One can recognise a Toprim domain in the interval 186–260 (DSIIVVEGRN…EVDFVARAPP (75 aa)). Mg(2+) is bound by residues glutamate 192, aspartate 234, and aspartate 236.

The protein belongs to the archaeal DnaG primase family. As to quaternary structure, forms a ternary complex with MCM helicase and DNA. Component of the archaeal exosome complex. The cofactor is Mg(2+).

It carries out the reaction ssDNA + n NTP = ssDNA/pppN(pN)n-1 hybrid + (n-1) diphosphate.. Functionally, RNA polymerase that catalyzes the synthesis of short RNA molecules used as primers for DNA polymerase during DNA replication. Also part of the exosome, which is a complex involved in RNA degradation. Acts as a poly(A)-binding protein that enhances the interaction between heteromeric, adenine-rich transcripts and the exosome. This is DNA primase DnaG from Thermoplasma volcanium (strain ATCC 51530 / DSM 4299 / JCM 9571 / NBRC 15438 / GSS1).